We begin with the raw amino-acid sequence, 392 residues long: Autophagy-related protein 21 (392 aa).

WD repeat units follow at residues 200–240 (VHQS…NDEP) and 250–289 (SRPS…TEAD). Residues 246-250 (FRRGS) carry the L/FRRG motif motif.

It belongs to the WD repeat PROPPIN family.

The protein resides in the cytoplasm. It is found in the membrane. The protein localises to the vacuole membrane. Functionally, required for cytoplasm to vacuole transport (Cvt) vesicles formation and mitophagy. Involved in binding of phosphatidylethanolamine to ATG8 and in recruitment of ATG8 and ATG5 to the pre-autophagosomal structure. Protects ATG8 from ARG4-mediated cleavage. The protein is Autophagy-related protein 21 (ATG21) of Kluyveromyces lactis (strain ATCC 8585 / CBS 2359 / DSM 70799 / NBRC 1267 / NRRL Y-1140 / WM37) (Yeast).